Consider the following 86-residue polypeptide: Putative membrane protein insertion efficiency factor (86 aa).

The protein belongs to the UPF0161 family.

It localises to the cell inner membrane. In terms of biological role, could be involved in insertion of integral membrane proteins into the membrane. The chain is Putative membrane protein insertion efficiency factor from Pseudomonas aeruginosa (strain UCBPP-PA14).